The following is a 225-amino-acid chain: Germin-like protein 8-7 (225 aa).

Positions 1 to 23 (MASPSSFCLLAVLLALVSWQAIA) are cleaved as a signal peptide. Cysteine 33 and cysteine 48 are disulfide-bonded. Residues 63–213 (AMLDTPRKTN…AFQVEKGTID (151 aa)) enclose the Cupin type-1 domain. Asparagine 77 carries an N-linked (GlcNAc...) asparagine glycan. Positions 110, 112, and 117 each coordinate Mn(2+). Asparagine 136 carries N-linked (GlcNAc...) asparagine glycosylation. Histidine 158 lines the Mn(2+) pocket.

This sequence belongs to the germin family. As to quaternary structure, oligomer (believed to be a pentamer but probably hexamer).

The protein localises to the secreted. It is found in the extracellular space. Its subcellular location is the apoplast. Its function is as follows. Plays a role in broad-spectrum disease resistance. Probably has no oxalate oxidase activity even if the active site is conserved. The polypeptide is Germin-like protein 8-7 (GER6) (Oryza sativa subsp. japonica (Rice)).